The primary structure comprises 141 residues: Nucleoside diphosphate kinase (141 aa).

ATP-binding residues include Lys11, Phe59, Arg87, Thr93, Arg104, and Asn114. The Pros-phosphohistidine intermediate role is filled by His117.

The protein belongs to the NDK family. As to quaternary structure, homotetramer. Mg(2+) is required as a cofactor.

The protein localises to the cytoplasm. The enzyme catalyses a 2'-deoxyribonucleoside 5'-diphosphate + ATP = a 2'-deoxyribonucleoside 5'-triphosphate + ADP. The catalysed reaction is a ribonucleoside 5'-diphosphate + ATP = a ribonucleoside 5'-triphosphate + ADP. Major role in the synthesis of nucleoside triphosphates other than ATP. The ATP gamma phosphate is transferred to the NDP beta phosphate via a ping-pong mechanism, using a phosphorylated active-site intermediate. This chain is Nucleoside diphosphate kinase, found in Proteus mirabilis (strain HI4320).